A 370-amino-acid chain; its full sequence is 3-dehydroquinate synthase (370 aa).

Residues 107-111, 131-132, K144, and K153 contribute to the NAD(+) site; these read GVIGD and TS. E186, H249, and H267 together coordinate Zn(2+).

It belongs to the sugar phosphate cyclases superfamily. Dehydroquinate synthase family. The cofactor is Co(2+). It depends on Zn(2+) as a cofactor. NAD(+) serves as cofactor.

The protein localises to the cytoplasm. It carries out the reaction 7-phospho-2-dehydro-3-deoxy-D-arabino-heptonate = 3-dehydroquinate + phosphate. Its pathway is metabolic intermediate biosynthesis; chorismate biosynthesis; chorismate from D-erythrose 4-phosphate and phosphoenolpyruvate: step 2/7. Catalyzes the conversion of 3-deoxy-D-arabino-heptulosonate 7-phosphate (DAHP) to dehydroquinate (DHQ). This chain is 3-dehydroquinate synthase, found in Ruegeria pomeroyi (strain ATCC 700808 / DSM 15171 / DSS-3) (Silicibacter pomeroyi).